We begin with the raw amino-acid sequence, 342 residues long: uncharacterized protein (342 aa).

Belongs to the bacterial luciferase oxidoreductase family.

This is an uncharacterized protein from Sinorhizobium fredii (strain NBRC 101917 / NGR234).